Reading from the N-terminus, the 110-residue chain is Flagellar hook-basal body complex protein FliE (110 aa).

This sequence belongs to the FliE family.

It is found in the bacterial flagellum basal body. The protein is Flagellar hook-basal body complex protein FliE of Bordetella petrii (strain ATCC BAA-461 / DSM 12804 / CCUG 43448).